Here is a 429-residue protein sequence, read N- to C-terminus: Adenylosuccinate synthetase (429 aa).

Residues 12-18 (GDEGKGK) and 40-42 (GHT) contribute to the GTP site. Residue Asp-13 is the Proton acceptor of the active site. Mg(2+) is bound by residues Asp-13 and Gly-40. Residues 13 to 16 (DEGK), 38 to 41 (NAGH), Thr-128, Arg-142, Gln-223, Thr-238, and Arg-302 contribute to the IMP site. His-41 functions as the Proton donor in the catalytic mechanism. Residue 298–304 (VNTGRPR) coordinates substrate. Residues Arg-304, 330–332 (KLD), and 412–414 (GVG) each bind GTP.

The protein belongs to the adenylosuccinate synthetase family. Homodimer. Requires Mg(2+) as cofactor.

It localises to the cytoplasm. The catalysed reaction is IMP + L-aspartate + GTP = N(6)-(1,2-dicarboxyethyl)-AMP + GDP + phosphate + 2 H(+). It functions in the pathway purine metabolism; AMP biosynthesis via de novo pathway; AMP from IMP: step 1/2. Functionally, plays an important role in the de novo pathway of purine nucleotide biosynthesis. Catalyzes the first committed step in the biosynthesis of AMP from IMP. In Renibacterium salmoninarum (strain ATCC 33209 / DSM 20767 / JCM 11484 / NBRC 15589 / NCIMB 2235), this protein is Adenylosuccinate synthetase.